The chain runs to 463 residues: Glutamate--tRNA ligase (463 aa).

A 'HIGH' region motif is present at residues 8–18 (PSPTGYLHIGG). Positions 236–240 (RLSKR) match the 'KMSKS' region motif. An ATP-binding site is contributed by K239.

Belongs to the class-I aminoacyl-tRNA synthetase family. Glutamate--tRNA ligase type 1 subfamily. Monomer.

The protein localises to the cytoplasm. It catalyses the reaction tRNA(Glu) + L-glutamate + ATP = L-glutamyl-tRNA(Glu) + AMP + diphosphate. Functionally, catalyzes the attachment of glutamate to tRNA(Glu) in a two-step reaction: glutamate is first activated by ATP to form Glu-AMP and then transferred to the acceptor end of tRNA(Glu). This Nitrosomonas europaea (strain ATCC 19718 / CIP 103999 / KCTC 2705 / NBRC 14298) protein is Glutamate--tRNA ligase.